A 342-amino-acid polypeptide reads, in one-letter code: Phomopsin biosynthesis cluster protein B (342 aa).

The interval 1–22 (MESIAKAKSLPNKGRTYDSQRP) is disordered. A helical transmembrane segment spans residues 87–107 (VLIIGCAVISLFAIIGALGFA). The tract at residues 118-186 (CASPAHQNPH…QCGESPDEAQ (69 aa)) is disordered. Residues 144 to 155 (HSGSHSSSSSTN) are compositionally biased toward low complexity. N-linked (GlcNAc...) asparagine glycosylation occurs at N248.

The protein localises to the membrane. Part of the gene cluster that mediates the biosynthesis of the phomopsins, a group of hexapeptide mycotoxins which infects lupins and causes lupinosis disease in livestock. The role of phomB within the phomopsins biosynthesis pathway has still to be determined. The pathway starts with the processing of the precursor phomA by several endopeptidases including kexin proteases as well as the cluster-specific S41 family peptidase phomP1 and the oligopeptidase phomG to produce 10 identical copies of the hexapeptide Tyr-Val-Ile-Pro-Ile-Asp. After being excised from the precursor peptide, the core peptides are cyclized and modified post-translationally by enzymes encoded within the gene cluster. The timing and order of proteolysis of the phomA precursor and PTMs are still unknown. Two tyrosinase-like enzymes, phomQ1 and phomQ2, catalyze the chlorination and hydroxylation of Tyr, respectively. PhomYb, is proposed to be involved in the construction of the macrocyclic structure. The other 4 ustYa family proteins may be involved in PTMs that generate the unique structure of phomopsin A. PhomYa is required for the hydroxylation of C-beta of Tyr. PhomYc, phomYd, and phomYe are responsible for the biosynthesis of 2,3-dehydroisoleucine (dIle), 2,3-dehydroaspartic acid (dAsp), and 3,4-dehydroproline (dPro), respectively. While dIle formation by phomYc is indispensable for the installation of dAsp by phomYd, the order of the other PTMs have not been elucidated yet. Most of the biosynthetic enzymes likely have broad substrate specificity, and thus, there might be a metabolic grid from a precursor to phomopsin A. The enzyme(s) responsible for the biosynthesis of 3,4-dehydrovaline (dVal) have also not been identified yet. Finally, phomM acts as an S-adenosylmethionine-dependent alpha-N-methyltransferase that catalyzes two successive N-methylation reactions, converting N-desmethyl-phomopsin A to phomopsin A and phomopsin A further to an N,N-dimethylated congener called phomopsin E. This chain is Phomopsin biosynthesis cluster protein B, found in Diaporthe leptostromiformis (Lupinosis disease fungus).